A 91-amino-acid chain; its full sequence is PGSPQKRAASPRKSPRKGSPKKSPMIRAAITAMRERKGSSVAKIKSYIAANYRVNMTNLQPHIRRALRSGVASGALKQVTGTGATGRFRVG.

The segment at 1-25 (PGSPQKRAASPRKSPRKGSPKKSPM) is disordered. A compositionally biased stretch (basic residues) spans 9–20 (ASPRKSPRKGSP). Residues 18–91 (GSPKKSPMIR…TGATGRFRVG (74 aa)) enclose the H15 domain.

The protein belongs to the histone H1/H5 family.

Its subcellular location is the nucleus. It is found in the chromosome. Histones H1 are necessary for the condensation of nucleosome chains into higher-order structures. This chain is Histone H1, sperm, found in Sphaerechinus granularis (Purple sea urchin).